Here is a 317-residue protein sequence, read N- to C-terminus: L-lactate dehydrogenase (317 aa).

NAD(+) contacts are provided by residues Val-16, Asp-37, Lys-42, Tyr-68, and 82-83 (GA). Residues Gln-85 and Arg-91 each contribute to the substrate site. NAD(+)-binding positions include Thr-104, 121–123 (ATN), and Ser-146. 123-126 (NPVD) is a substrate binding site. 151–154 (DTAR) provides a ligand contact to substrate. Beta-D-fructose 1,6-bisphosphate-binding residues include Arg-156 and His-171. Residue His-178 is the Proton acceptor of the active site. At Tyr-222 the chain carries Phosphotyrosine. Residue Thr-231 participates in substrate binding.

The protein belongs to the LDH/MDH superfamily. LDH family. In terms of assembly, homotetramer.

It localises to the cytoplasm. It catalyses the reaction (S)-lactate + NAD(+) = pyruvate + NADH + H(+). It participates in fermentation; pyruvate fermentation to lactate; (S)-lactate from pyruvate: step 1/1. With respect to regulation, allosterically activated by fructose 1,6-bisphosphate (FBP). In terms of biological role, catalyzes the conversion of lactate to pyruvate. In Corynebacterium efficiens (strain DSM 44549 / YS-314 / AJ 12310 / JCM 11189 / NBRC 100395), this protein is L-lactate dehydrogenase.